A 334-amino-acid chain; its full sequence is Ornithine carbamoyltransferase (334 aa).

Carbamoyl phosphate-binding positions include 57–60 (STRT), Q84, R108, and 135–138 (HPTQ). L-ornithine-binding positions include N169, D233, and 237–238 (SM). Residues 275–276 (CL) and R320 each bind carbamoyl phosphate.

It belongs to the aspartate/ornithine carbamoyltransferase superfamily. OTCase family.

It localises to the cytoplasm. It carries out the reaction carbamoyl phosphate + L-ornithine = L-citrulline + phosphate + H(+). It participates in amino-acid biosynthesis; L-arginine biosynthesis; L-arginine from L-ornithine and carbamoyl phosphate: step 1/3. Functionally, reversibly catalyzes the transfer of the carbamoyl group from carbamoyl phosphate (CP) to the N(epsilon) atom of ornithine (ORN) to produce L-citrulline. This chain is Ornithine carbamoyltransferase, found in Aeromonas hydrophila subsp. hydrophila (strain ATCC 7966 / DSM 30187 / BCRC 13018 / CCUG 14551 / JCM 1027 / KCTC 2358 / NCIMB 9240 / NCTC 8049).